Reading from the N-terminus, the 291-residue chain is Aspartate carbamoyltransferase catalytic subunit (291 aa).

Residues Arg-47 and Thr-48 each contribute to the carbamoyl phosphate site. Residue Lys-75 participates in L-aspartate binding. Residues Arg-97, His-126, and Gln-129 each contribute to the carbamoyl phosphate site. Positions 159 and 213 each coordinate L-aspartate. Gly-251 and Pro-252 together coordinate carbamoyl phosphate.

Belongs to the aspartate/ornithine carbamoyltransferase superfamily. ATCase family. In terms of assembly, heterododecamer (2C3:3R2) of six catalytic PyrB chains organized as two trimers (C3), and six regulatory PyrI chains organized as three dimers (R2).

The catalysed reaction is carbamoyl phosphate + L-aspartate = N-carbamoyl-L-aspartate + phosphate + H(+). It functions in the pathway pyrimidine metabolism; UMP biosynthesis via de novo pathway; (S)-dihydroorotate from bicarbonate: step 2/3. Functionally, catalyzes the condensation of carbamoyl phosphate and aspartate to form carbamoyl aspartate and inorganic phosphate, the committed step in the de novo pyrimidine nucleotide biosynthesis pathway. In Aquifex aeolicus (strain VF5), this protein is Aspartate carbamoyltransferase catalytic subunit.